A 147-amino-acid polypeptide reads, in one-letter code: 3-dehydroquinate dehydratase (147 aa).

Tyr-24 functions as the Proton acceptor in the catalytic mechanism. Substrate-binding residues include Asn-73, His-79, and Asp-86. His-99 acts as the Proton donor in catalysis. Substrate is bound by residues 100 to 101 (LS) and Arg-110.

Belongs to the type-II 3-dehydroquinase family. As to quaternary structure, homododecamer.

It catalyses the reaction 3-dehydroquinate = 3-dehydroshikimate + H2O. It functions in the pathway metabolic intermediate biosynthesis; chorismate biosynthesis; chorismate from D-erythrose 4-phosphate and phosphoenolpyruvate: step 3/7. Catalyzes a trans-dehydration via an enolate intermediate. The sequence is that of 3-dehydroquinate dehydratase from Hyphomonas neptunium (strain ATCC 15444).